Reading from the N-terminus, the 216-residue chain is Orotate phosphoribosyltransferase (216 aa).

Residues R100, K104, H106, and 126 to 134 (EDLISTGGS) contribute to the 5-phospho-alpha-D-ribose 1-diphosphate site. An orotate-binding site is contributed by S130.

This sequence belongs to the purine/pyrimidine phosphoribosyltransferase family. PyrE subfamily. As to quaternary structure, homodimer. Interacts with BrxC. Mg(2+) is required as a cofactor.

It catalyses the reaction orotidine 5'-phosphate + diphosphate = orotate + 5-phospho-alpha-D-ribose 1-diphosphate. The protein operates within pyrimidine metabolism; UMP biosynthesis via de novo pathway; UMP from orotate: step 1/2. In terms of biological role, catalyzes the transfer of a ribosyl phosphate group from 5-phosphoribose 1-diphosphate to orotate, leading to the formation of orotidine monophosphate (OMP). The protein is Orotate phosphoribosyltransferase of Bacillus subtilis (strain 168).